The sequence spans 1412 residues: MTSSTTGDRRWGTTRRSGMTILGKVAVPKPINLPSQRLENQGLDPNVEIVPKGTLSWGSKSSLNAWGTSSLSPRTESGPGSPSHLSNRPSSGGSVTRPSTADSNKAHDSSSSVAWDSNSRPSSASGVFPSNQPSVALQRPHSADTRPGSSQLSRFAEPVSETSATWGQHVAPEKLGVAPSKNDGFSLTSGDFPSLGAEKDTSEKSTRPQDAGPHARPPSSSGRSVEGQGVDCTEEANDRIGDANSWRRENQPYSEDAPRHCREEGQLDSRGSQSYPNANFPPRYDAWRGPPVNNHQGGGWYGGNHPYGAPMGPGGFHMDPFPFYPTQVPPAPGHGAGPRGNHANNERMFRPPMLDSYVHPRMQTRPGFYVGPAPHEGYYGPPMGYGSPSNRDLPFAGRPTGPHAYNNHSGQGGYDTPGSSVSLERNESSHSQETQRPYKVLLKHQDGRFGEDNAKREEFLGNRLPNAEKIAQQMQTSRNERREIRNDASGEVQPVKAELAAPGDPSLIQKIEGLNAKTRTNDGWQNSSSVVNRDEQESQPRTLNSGNSANKVSARNHRTGHASDSKNSSHYNQGDSATNKNAEPAAMGGTSIFRRPTQQTQGRADPQTKRIVNSEGNDAWQKTTVMSGSSHTTLATNTESFREVNVDDSLDTESIRRPGSGISADPKDNQRSTMRELARQRAQQRQKEEEERARDQRAKALAKLEELNRRSQIYEEGSVKNMEAASNASPADMPTDPGSHSSNATNSVEPTGGSGKNTTQNTRTSTEYANNVGPSQQDNLPRDGGASKQKRLGYKQKQNIIFEKKPTGSSVATAEVFDVVPSPEVVNEGVSSNNSDMPATSTVSAESTFPKRKNNRNGKKKHKAEETATMNTTRVAVGKETKSGDESIETARARAAEIELGSVSVPSLDIKVSGDSSEQISSFTNEESQNRAKNNWKSQHVRRTQRNSLVNKPAEKFSGNNAVIWAPVHPQQKADVSTGGGSQTTVPEFGTSSKSQHQGQTSSKSKRVEIERYVPKPIVKEMAEQIVSKNLVTSAPDMSENVNQKENRGGEGTGILQPSGSTAGKSGSPSKSRHGNGRQGKHGREHASWHQRGSGAPTKALEDGQFVTSNQPIRGTVNYHSSKQTEQIAAKDQTTCNKDGWNDGWYMTPETHYSAAEEMESSAVGKDQGMSMHGRQHASRSNKDGGSNYGDPKKGNKRDFNKAHTQHSGHGFSQPDLPAASKEGRVPGDHVWHTANRTGKYGGRESTRDKPYGSQEKNVVGYEHQGFTTEQKTTSADTQAQLQNRSTNKEVQVEQNPNSMFQKNTGQGRRFGRGQESQGGWGLPAQENMHHHHQRPPSNRDRQKQNLHYEYKPVGSHTYDGERSREQSKESSQTEGPRYREKGQGQQRQGGYQQQRGTSGRNGGHGFTGDRN.

6 disordered regions span residues 1-276 (MTSS…QSYP), 384-437 (GYGS…TQRP), 472-798 (QQMQ…KQKQ), 827-888 (NEGV…DESI), 909-1144 (DIKV…WNDG), and 1156-1412 (AEEM…GDRN). Over residues 56 to 103 (SWGSKSSLNAWGTSSLSPRTESGPGSPSHLSNRPSSGGSVTRPSTADS) the composition is skewed to polar residues. The residue at position 72 (serine 72) is a Phosphoserine. Over residues 109 to 119 (SSSSVAWDSNS) the composition is skewed to low complexity. The span at 120-135 (RPSSASGVFPSNQPSV) shows a compositional bias: polar residues. Basic and acidic residues-rich tracts occupy residues 197–207 (AEKDTSEKSTR) and 236–267 (ANDR…EGQL). Positions 478–488 (RNERREIRNDA) are enriched in basic and acidic residues. Polar residues-rich tracts occupy residues 517–531 (KTRT…SSVV), 539–553 (QPRT…NKVS), 565–581 (SKNS…TNKN), and 610–639 (RIVN…TNTE). The segment covering 665-713 (DPKDNQRSTMRELARQRAQQRQKEEEERARDQRAKALAKLEELNRRSQI) has biased composition (basic and acidic residues). The stretch at 667 to 717 (KDNQRSTMRELARQRAQQRQKEEEERARDQRAKALAKLEELNRRSQIYEEG) forms a coiled coil. Composition is skewed to polar residues over residues 738-749 (GSHSSNATNSVE), 756-779 (KNTT…QQDN), and 829-847 (GVSS…SAES). Basic residues predominate over residues 850–862 (PKRKNNRNGKKKH). Basic and acidic residues predominate over residues 877–888 (VGKETKSGDESI). Phosphoserine is present on serine 883. Polar residues-rich tracts occupy residues 914–938 (GDSS…NWKS) and 983–1003 (QTTV…QTSS). Basic and acidic residues predominate over residues 1006 to 1023 (KRVEIERYVPKPIVKEMA). The segment covering 1056 to 1070 (LQPSGSTAGKSGSPS) has biased composition (polar residues). Over residues 1071–1084 (KSRHGNGRQGKHGR) the composition is skewed to basic residues. Residues 1106 to 1137 (FVTSNQPIRGTVNYHSSKQTEQIAAKDQTTCN) show a composition bias toward polar residues. Composition is skewed to basic and acidic residues over residues 1191 to 1202 (DPKKGNKRDFNK), 1222 to 1232 (KEGRVPGDHVW), and 1242 to 1251 (GGRESTRDKP). 2 stretches are compositionally biased toward polar residues: residues 1266 to 1286 (GFTT…QNRS) and 1293 to 1307 (VEQN…NTGQ). Composition is skewed to basic and acidic residues over residues 1338–1351 (SNRD…HYEY) and 1359–1369 (YDGERSREQSK). The span at 1384–1397 (QGQQRQGGYQQQRG) shows a compositional bias: low complexity. Residues 1400-1412 (GRNGGHGFTGDRN) show a composition bias toward gly residues.

As to quaternary structure, interacts with TCP14 and TCP15.

Its function is as follows. Involved in the regulation of the chromatin structure and DNA methylation at the SNC1 locus. Regulates the expression of SNC1 at chromatin level. The protein is Protein MODIFIER OF SNC1 1 (MOS1) of Arabidopsis thaliana (Mouse-ear cress).